A 250-amino-acid polypeptide reads, in one-letter code: Endonuclease NucS (250 aa).

Belongs to the NucS endonuclease family.

It is found in the cytoplasm. Its function is as follows. Cleaves both 3' and 5' ssDNA extremities of branched DNA structures. In Sulfolobus acidocaldarius (strain ATCC 33909 / DSM 639 / JCM 8929 / NBRC 15157 / NCIMB 11770), this protein is Endonuclease NucS.